Consider the following 802-residue polypeptide: Chondroitin sulfate synthase 1 (802 aa).

Topologically, residues 1-7 are cytoplasmic; sequence MAARGRR. A helical; Signal-anchor for type II membrane protein transmembrane segment spans residues 8 to 28; that stretch reads AWLSVLLGLVLGFVLASRLVL. Topologically, residues 29-802 are lumenal; that stretch reads PRASELKRAG…SNNNGSVRTA (774 aa). The segment at 34–82 is disordered; that stretch reads LKRAGPRRRASPEGCRSGQAAASQAGGARGDARGAQLWPPGSDPDGGPR. Composition is skewed to low complexity over residues 49–59 and 66–78; these read RSGQAAASQAG and RGAQ…SDPD. 2 N-linked (GlcNAc...) asparagine glycosylation sites follow: asparagine 189 and asparagine 623. Residues aspartate 633 and histidine 747 each coordinate a divalent metal cation. Asparagine 796 is a glycosylation site (N-linked (GlcNAc...) asparagine).

Belongs to the chondroitin N-acetylgalactosaminyltransferase family. Co(2+) is required as a cofactor. It depends on Mn(2+) as a cofactor. The cofactor is Cd(2+). Ubiquitous, with the highest levels in placenta. Detected at low levels in brain, heart, skeletal muscle, colon, thymus, spleen, kidney, liver, adrenal gland, mammary gland, stomach, small intestine, lung and peripheral blood leukocytes.

Its subcellular location is the golgi apparatus. It localises to the golgi stack membrane. The protein resides in the secreted. The catalysed reaction is 3-O-(beta-D-GlcA-(1-&gt;3)-beta-D-GalNAc-(1-&gt;4)-beta-D-GlcA-(1-&gt;3)-beta-D-Gal-(1-&gt;3)-beta-D-Gal-(1-&gt;4)-beta-D-Xyl)-L-seryl-[protein] + UDP-N-acetyl-alpha-D-galactosamine = 3-O-(beta-D-GalNAc-(1-&gt;4)-beta-D-GlcA-(1-&gt;3)-beta-D-GalNAc-(1-&gt;4)-beta-D-GlcA-(1-&gt;3)-beta-D-Gal-(1-&gt;3)-beta-D-Gal-(1-&gt;4)-beta-D-Xyl)-L-seryl-[protein] + UDP + H(+). It catalyses the reaction 3-O-{beta-D-GlcA-(1-&gt;3)-[beta-D-GalNAc-(1-&gt;4)-beta-D-GlcA-(1-&gt;3)](n)-beta-D-GalNAc-(1-&gt;4)-beta-D-GlcA-(1-&gt;3)-beta-D-Gal-(1-&gt;3)-beta-D-Gal-(1-&gt;4)-beta-D-Xyl}-L-seryl-[protein] + UDP-N-acetyl-alpha-D-galactosamine = 3-O-{[beta-D-GalNAc-(1-&gt;4)-beta-D-GlcA-(1-&gt;3)](n+1)-beta-D-GalNAc-(1-&gt;4)-beta-D-GlcA-(1-&gt;3)-beta-D-Gal-(1-&gt;3)-beta-D-Gal-(1-&gt;4)-beta-D-Xyl}-L-seryl-[protein] + UDP + H(+). The enzyme catalyses 3-O-(beta-D-GalNAc-(1-&gt;4)-beta-D-GlcA-(1-&gt;3)-beta-D-Gal-(1-&gt;3)-beta-D-Gal-(1-&gt;4)-beta-D-Xyl)-L-seryl-[protein] + UDP-alpha-D-glucuronate = 3-O-(beta-D-GlcA-(1-&gt;3)-beta-D-GalNAc-(1-&gt;4)-beta-D-GlcA-(1-&gt;3)-beta-D-Gal-(1-&gt;3)-beta-D-Gal-(1-&gt;4)-beta-D-Xyl)-L-seryl-[protein] + UDP + H(+). It carries out the reaction 3-O-{[beta-D-GalNAc-(1-&gt;4)-beta-D-GlcA-(1-&gt;3)](n)-beta-D-GalNAc-(1-&gt;4)-beta-D-GlcA-(1-&gt;3)-beta-D-Gal-(1-&gt;3)-beta-D-Gal-(1-&gt;4)-beta-D-Xyl}-L-seryl-[protein] + UDP-alpha-D-glucuronate = 3-O-{beta-D-GlcA-(1-&gt;3)-[beta-D-GalNAc-(1-&gt;4)-beta-D-GlcA-(1-&gt;3)](n)-beta-D-GalNAc-(1-&gt;4)-beta-D-GlcA-(1-&gt;3)-beta-D-Gal-(1-&gt;3)-beta-D-Gal-(1-&gt;4)-beta-D-Xyl}-L-seryl-[protein] + UDP + H(+). Its function is as follows. Has both beta-1,3-glucuronic acid and beta-1,4-N-acetylgalactosamine transferase activity. Transfers glucuronic acid (GlcUA) from UDP-GlcUA and N-acetylgalactosamine (GalNAc) from UDP-GalNAc to the non-reducing end of the elongating chondroitin polymer. Involved in the negative control of osteogenesis likely through the modulation of NOTCH signaling. In Homo sapiens (Human), this protein is Chondroitin sulfate synthase 1.